The primary structure comprises 227 residues: MAPYHIRKYQESDRKSVVGLLSGGMAEHAPATFRRLLKLPRTLILLLGGALALLLVSGSWILALVFSLSLLPALWFLAKKPWTRYVDIALRTDMSDITKSYLSECGSCFWVAESEEKVVGTVGALPVDDPTLREKRLQLFHLSVDNEHRGQGIAKALVRTVLQFARDQGYSEVVLDTSNIQLSAMGLYQSLGFKKTGQSFFHVWARLVDLHTVHFIYHLPSAQAGRL.

Over 1–42 (MAPYHIRKYQESDRKSVVGLLSGGMAEHAPATFRRLLKLPRT) the chain is Cytoplasmic. Residues 43-63 (LILLLGGALALLLVSGSWILA) traverse the membrane as a helical; Signal-anchor for type II membrane protein segment. One can recognise an N-acetyltransferase domain in the interval 61–214 (ILALVFSLSL…ARLVDLHTVH (154 aa)). At 64-227 (LVFSLSLLPA…HLPSAQAGRL (164 aa)) the chain is on the lumenal side. Lysine 99 carries the N6-acetyllysine modification.

It belongs to the NAT8 family. Acetylation on Lys-99 modulates enzymatic activity.

The protein resides in the endoplasmic reticulum-Golgi intermediate compartment membrane. It localises to the endoplasmic reticulum membrane. It carries out the reaction L-lysyl-[protein] + acetyl-CoA = N(6)-acetyl-L-lysyl-[protein] + CoA + H(+). Allosterically regulated by acetylation at residue Lys-99. Its function is as follows. Endoplasmic reticulum (ER)-membrane-bound lysine N-acetyltransferase catalyzing the N6-acetylation of lysine residues in the lumen of the ER in various proteins, including PROM1 and BACE1, using acetyl-CoA as acetyl donor. Thereby, may regulate apoptosis through the acetylation and the regulation of the expression of PROM1. Acetylates and stabilizes BACE1 immature protein, leading to increased steady-state levels in neurons. By acting on BACE1 expression, may regulate amyloid beta-peptide formation. N(6)-lysine acetylation in ER maintains protein homeostasis and regulates reticulophagy. The polypeptide is N-acetyltransferase 8B (Homo sapiens (Human)).